Reading from the N-terminus, the 314-residue chain is Nodulation protein D 1 (314 aa).

Positions 6–63 (LDLNLLVVLDALLTERTLTAAASSINLSQPAMSAAVARLRDYFNDELFTTSGRERVLT) constitute an HTH lysR-type domain. The H-T-H motif DNA-binding region spans 23–42 (LTAAASSINLSQPAMSAAVA).

Belongs to the LysR transcriptional regulatory family.

Functionally, nodD regulates the expression of the nodABCFE genes which encode other nodulation proteins. NodD is also a negative regulator of its own expression. Binds flavenoids as inducers. The chain is Nodulation protein D 1 (nodD1) from Mesorhizobium japonicum (strain LMG 29417 / CECT 9101 / MAFF 303099) (Mesorhizobium loti (strain MAFF 303099)).